Here is a 72-residue protein sequence, read N- to C-terminus: MIIPWQEIAPDTLERLIEAFVLREGTDYGEHERSLEQKVADVRRQLQSGEAVLVWSELHETVNIMPRSQFRG.

The protein belongs to the UPF0270 family.

In Cronobacter sakazakii (strain ATCC BAA-894) (Enterobacter sakazakii), this protein is UPF0270 protein ESA_04379.